The primary structure comprises 226 residues: Ribonuclease 3 (226 aa).

Residues Met6–Asn128 enclose the RNase III domain. Residue Glu41 coordinates Mg(2+). Asp45 is an active-site residue. The Mg(2+) site is built by Asn114 and Glu117. The active site involves Glu117. In terms of domain architecture, DRBM spans Asp155–Val225.

The protein belongs to the ribonuclease III family. In terms of assembly, homodimer. Requires Mg(2+) as cofactor.

It localises to the cytoplasm. The catalysed reaction is Endonucleolytic cleavage to 5'-phosphomonoester.. In terms of biological role, digests double-stranded RNA. Involved in the processing of primary rRNA transcript to yield the immediate precursors to the large and small rRNAs (23S and 16S). Processes some mRNAs, and tRNAs when they are encoded in the rRNA operon. Processes pre-crRNA and tracrRNA of type II CRISPR loci if present in the organism. The protein is Ribonuclease 3 of Buchnera aphidicola subsp. Cinara cedri (strain Cc).